We begin with the raw amino-acid sequence, 726 residues long: Dipeptidyl-peptidase 5 (726 aa).

The N-terminal stretch at 1 to 19 (MAAAKWLIASLAFASSGLA) is a signal peptide. N-linked (GlcNAc...) asparagine glycans are attached at residues Asn-96 and Asn-252. Residues 269–291 (AEPINKRNGPRTPQGIEGASSSP) are disordered. The Charge relay system role is filled by Ser-558. Asn-605 carries an N-linked (GlcNAc...) asparagine glycan. Active-site charge relay system residues include Asp-641 and His-673. The N-linked (GlcNAc...) asparagine glycan is linked to Asn-699.

It belongs to the peptidase S9C family.

The protein resides in the secreted. The sequence is that of Dipeptidyl-peptidase 5 (DPPV) from Arthroderma benhamiae (Trichophyton mentagrophytes).